Here is a 139-residue protein sequence, read N- to C-terminus: Transcription antitermination protein NusB (139 aa).

Belongs to the NusB family.

Its function is as follows. Involved in transcription antitermination. Required for transcription of ribosomal RNA (rRNA) genes. Binds specifically to the boxA antiterminator sequence of the ribosomal RNA (rrn) operons. This is Transcription antitermination protein NusB from Idiomarina loihiensis (strain ATCC BAA-735 / DSM 15497 / L2-TR).